A 119-amino-acid chain; its full sequence is NADH-quinone oxidoreductase subunit A (119 aa).

The next 3 membrane-spanning stretches (helical) occupy residues 9–29 (VLLF…LGYV), 63–83 (LVAI…PWAV), and 88–108 (VGGA…VGFV).

Belongs to the complex I subunit 3 family. As to quaternary structure, NDH-1 is composed of 14 different subunits. Subunits NuoA, H, J, K, L, M, N constitute the membrane sector of the complex.

The protein localises to the cell inner membrane. It carries out the reaction a quinone + NADH + 5 H(+)(in) = a quinol + NAD(+) + 4 H(+)(out). Its function is as follows. NDH-1 shuttles electrons from NADH, via FMN and iron-sulfur (Fe-S) centers, to quinones in the respiratory chain. The immediate electron acceptor for the enzyme in this species is believed to be ubiquinone. Couples the redox reaction to proton translocation (for every two electrons transferred, four hydrogen ions are translocated across the cytoplasmic membrane), and thus conserves the redox energy in a proton gradient. In Delftia acidovorans (strain DSM 14801 / SPH-1), this protein is NADH-quinone oxidoreductase subunit A.